We begin with the raw amino-acid sequence, 609 residues long: Hemagglutinin/proteinase (609 aa).

The N-terminal stretch at 1-24 (MKMIQRPLNWLVLAGAATGFPLYA) is a signal peptide. Positions 25-196 (AQMVTIDDAS…LDQWDGINHA (172 aa)) are excised as a propeptide. His343 serves as a coordination point for Zn(2+). Residue Glu344 is part of the active site. Residues His347 and Glu367 each coordinate Zn(2+). His426 (proton donor) is an active-site residue.

It belongs to the peptidase M4 family. Zn(2+) is required as a cofactor.

Its subcellular location is the secreted. In terms of biological role, may play a role in the pathogenesis of cholera. Hap nicks and activates the A subunit of cholera enterotoxin and related enterotoxins. This is Hemagglutinin/proteinase (hap) from Vibrio cholerae serotype O1 (strain ATCC 39315 / El Tor Inaba N16961).